The primary structure comprises 978 residues: LRR receptor-like serine/threonine-protein kinase ER1 (978 aa).

The N-terminal stretch at 1–24 (MTPAPAAASYRALVALLLVAVAVA) is a signal peptide. Residues 25–577 (DDGSTLLEIK…GHQQKPLISK (553 aa)) are Extracellular-facing. 2 N-linked (GlcNAc...) asparagine glycosylation sites follow: asparagine 62 and asparagine 71. LRR repeat units follow at residues 66 to 87 (AVAA…AVGR), 88 to 112 (LKGI…IGDC), 114 to 136 (SLKT…VSKL), 137 to 159 (KHIE…TLSQ), 160 to 184 (LPNL…IYWN), 186 to 208 (VLQY…ICQL), 209 to 232 (TGLW…IGNC), 233 to 257 (TSFQ…GFLQ), 259 to 278 (ATLS…VIGL), 279 to 302 (MQAL…ILGN), 304 to 327 (TYTE…LGNM), 328 to 350 (STLH…EFGK), 352 to 375 (TGLF…ISSC), 377 to 399 (NLNS…LHKL), 400 to 423 (ESMT…LSRI), 424 to 447 (NNLD…IGSL), 449 to 470 (HLLR…EIGN), 471 to 494 (LRSI…ELGM), 496 to 518 (QNLM…LMNC), and 519 to 543 (FSLN…NFSR). Residues asparagine 218 and asparagine 231 are each glycosylated (N-linked (GlcNAc...) asparagine). Asparagine 302 and asparagine 326 each carry an N-linked (GlcNAc...) asparagine glycan. Residues asparagine 371, asparagine 389, and asparagine 406 are each glycosylated (N-linked (GlcNAc...) asparagine). Residue asparagine 454 is glycosylated (N-linked (GlcNAc...) asparagine). Residues asparagine 507, asparagine 525, and asparagine 540 are each glycosylated (N-linked (GlcNAc...) asparagine). The helical transmembrane segment at 578-598 (AAILGIAVGGLVILLMILVAV) threads the bilayer. The Cytoplasmic segment spans residues 599-978 (CRPHSPPVFK…FGEVISQNTE (380 aa)). Residues 645-916 (LSEKYIIGYG…EVVRVLDCLV (272 aa)) enclose the Protein kinase domain. Residues 651-659 (IGYGASSTV) and lysine 673 each bind ATP. Residue aspartate 771 is the Proton acceptor of the active site.

The protein belongs to the protein kinase superfamily. Ser/Thr protein kinase family.

It is found in the cell membrane. It carries out the reaction L-seryl-[protein] + ATP = O-phospho-L-seryl-[protein] + ADP + H(+). It catalyses the reaction L-threonyl-[protein] + ATP = O-phospho-L-threonyl-[protein] + ADP + H(+). Receptor kinase involved in the regulation of thermotolerance. Functions as a positive regulator of heat tolerance. May be involved in the regulation of cell proliferation and cell growth. This is LRR receptor-like serine/threonine-protein kinase ER1 from Oryza sativa subsp. japonica (Rice).